Reading from the N-terminus, the 57-residue chain is Preprotein translocase subunit SecG (57 aa).

Over 1–33 the chain is Cytoplasmic; it reads MPSSKKKKENVPVMSMAGLIRYYEEEHEKYKVD. A helical transmembrane segment spans residues 34-55; that stretch reads PIYVIIASIVLVAVVVAVTKII. The Extracellular portion of the chain corresponds to 56–57; that stretch reads PP.

This sequence belongs to the SEC61-beta family. In terms of assembly, component of the protein translocase complex. Heterotrimer consisting of alpha (SecY), beta (SecG) and gamma (SecE) subunits. Can form oligomers of the heterotrimer.

The protein resides in the cell membrane. In terms of biological role, involved in protein export. The function of the beta subunit is unknown, but it may be involved in stabilization of the trimeric complex. The chain is Preprotein translocase subunit SecG from Metallosphaera sedula (strain ATCC 51363 / DSM 5348 / JCM 9185 / NBRC 15509 / TH2).